A 73-amino-acid polypeptide reads, in one-letter code: Conotoxin Leo-O2 (73 aa).

The signal sequence occupies residues 1–22 (MKLTCVLIIAVLFLTACQLVTA). Residues 23-47 (DYSGDEQQYRAMRLIDAMRNFGDTR) constitute a propeptide that is removed on maturation. Cystine bridges form between Cys49/Cys59, Cys56/Cys64, and Cys58/Cys69.

This sequence belongs to the conotoxin O1 superfamily. Expressed by the venom duct.

The protein resides in the secreted. The sequence is that of Conotoxin Leo-O2 from Conus leopardus (Leopard cone).